The primary structure comprises 234 residues: HTH-type transcriptional repressor FabR (234 aa).

Residues 29-89 form the HTH tetR-type domain; it reads KTRRSLVEAA…TMVDESGLML (61 aa). The segment at residues 52-71 is a DNA-binding region (H-T-H motif); sequence SLREVAREAGIAPTSFYRHF.

Homodimer.

The protein localises to the cytoplasm. With respect to regulation, has been suggested to require either an unsaturated acyl carrier protein or unsaturated acyl-CoA (but not their saturated equivalents) for DNA-binding. Another group suggests that unsaturated thioesters are not essential but act instead to enhance DNA-binding. In terms of biological role, binds the promoter region of at least fabA and fabB, but probably not yqfA. Represses the transcription of fabA and fabB, involved in unsaturated fatty acid (UFA) biosynthesis. By controlling UFA production, FabR directly influences the physical properties of the membrane bilayer. In Escherichia coli (strain K12), this protein is HTH-type transcriptional repressor FabR.